We begin with the raw amino-acid sequence, 257 residues long: Imidazole glycerol phosphate synthase subunit HisF (257 aa).

Catalysis depends on residues D11 and D130.

The protein belongs to the HisA/HisF family. As to quaternary structure, heterodimer of HisH and HisF.

The protein resides in the cytoplasm. It carries out the reaction 5-[(5-phospho-1-deoxy-D-ribulos-1-ylimino)methylamino]-1-(5-phospho-beta-D-ribosyl)imidazole-4-carboxamide + L-glutamine = D-erythro-1-(imidazol-4-yl)glycerol 3-phosphate + 5-amino-1-(5-phospho-beta-D-ribosyl)imidazole-4-carboxamide + L-glutamate + H(+). The protein operates within amino-acid biosynthesis; L-histidine biosynthesis; L-histidine from 5-phospho-alpha-D-ribose 1-diphosphate: step 5/9. Functionally, IGPS catalyzes the conversion of PRFAR and glutamine to IGP, AICAR and glutamate. The HisF subunit catalyzes the cyclization activity that produces IGP and AICAR from PRFAR using the ammonia provided by the HisH subunit. This Francisella philomiragia subsp. philomiragia (strain ATCC 25017 / CCUG 19701 / FSC 153 / O#319-036) protein is Imidazole glycerol phosphate synthase subunit HisF.